Here is a 106-residue protein sequence, read N- to C-terminus: DNA-directed RNA polymerase subunit Rpo6 (106 aa).

The protein belongs to the archaeal Rpo6/eukaryotic RPB6 RNA polymerase subunit family. As to quaternary structure, part of the RNA polymerase complex.

The protein resides in the cytoplasm. The enzyme catalyses RNA(n) + a ribonucleoside 5'-triphosphate = RNA(n+1) + diphosphate. In terms of biological role, DNA-dependent RNA polymerase (RNAP) catalyzes the transcription of DNA into RNA using the four ribonucleoside triphosphates as substrates. The protein is DNA-directed RNA polymerase subunit Rpo6 of Pyrobaculum aerophilum (strain ATCC 51768 / DSM 7523 / JCM 9630 / CIP 104966 / NBRC 100827 / IM2).